The primary structure comprises 1414 residues: MKALLDLFKQVQQEEVFDAIKIGLASPDKIRSWSFGEVKKPETINYRTFKPERDGLFCAKIFGPIKDYECLCGKYKRLKHRGVICEKCGVEVTLAKVRRERMGHIELASPVAHIWFLKSLPSRLGMVLDMTLRDIERVLYFEAYVVIEPGMTPLKARQIMTEEDYYNKVEEYGDEFRAEMGAEGVRELLRAINIDEQVETLRTELKNTGSEAKIKKYAKRLKVLEAFQRSGIKPEWMILEVLPVLPPELRPLVPLDGGRFATSDLNDLYRRVINRNNRLKRLLELKAPEIIVRNEKRMLQEAVDSLLDNGRRGKAMTGANKRPLKSLADMIKGKGGRFRQNLLGKRVDYSGRSVIVVGPTLKLHQCGLPKLMALELFKPFIFNKLEVMGVATTIKAAKKEVENQTAVVWDILEEVIREHPVMLNRAPTLHRLGIQAFEPVLIEGKAIQLHPLVCAAFNADFDGDQMAVHVPLSLEAQMEARTLMLASNNVLFPANGDPSIVPSQDIVLGLYYATREAVNGKGEGLSFTGVSEVIRAYENKEVELASRVNVRITEMVHNEDTSEGAPPFVPKISLYATTVGRAILSEILPHGLPFSVLNKPLKKKEISRLINTAFRKCGLRATVVFADQLMQSGFRLATRAGISICVDDMLVPPQKETIVGDAAKKVKEYDRQYMSGLVTAQERYNNVVDIWSATSEAVGKAMMEQLSTEPVTDRDGKETRQESFNSIYMMADSGARGSAVQIRQLAGMRGLMAKPDGSIIETPITANFREGLNVLQYFISTHGARKGLADTALKTANSGYLTRRLVDVTQDLVVVEDDCGTSNGVAMKALVEGGEVVEALRDRILGRVAVADVVNPETQETVYESGTLLDETAVEEIERLGIDEVRVRTPLTCETRYGLCAACYGRDLGRGSLVNVGEAVGVIAAQSIGEPGTQLTMRTFHIGGAASRAAVASSVEAKSNGIVRFTATMRYVTNAKGEQIVISRSGEAMITDDFGRERERHKVPYGATLLQLDGVTIKAGTQLATWDPLTRPIITEYGGTVKFENVEEGVTVAKQIDDVTGLSTLVVIDVKRRGSQASKSVRPQVKLLDANGDEVKIPGTEHAVQIGFQVGALITVKDGQQVQVGEVLARIPTEAQKTRDITGGLPRVAELFEARSPKDAGILAEVTGTTSFGKDTKGKQRLVITDLEGNQHEFLIAKEKQVLVHDAQVVNKGEMIVDGPADPHDILRLQGIEALSRYIVDEVQDVYRLQGVKINDKHIEVIVRQMLRRVQITDNGDTRFIPGEQVERSDMLDENDRMIAEDKRPASYDNVLLGITKASLSTDSFISAASFQETTRVLTEAAIMGKRDDLRGLKENVIVGRLIPAGTGLAFHKARKAKESSDRERFDQIAAEEAFDFGTPSAPAEEPQQHPAAE.

Positions 70, 72, 85, and 88 each coordinate Zn(2+). Mg(2+) contacts are provided by D460, D462, and D464. Positions 819, 893, 900, and 903 each coordinate Zn(2+). The disordered stretch occupies residues A1391–E1414. The segment covering P1400 to E1414 has biased composition (low complexity).

Belongs to the RNA polymerase beta' chain family. As to quaternary structure, the RNAP catalytic core consists of 2 alpha, 1 beta, 1 beta' and 1 omega subunit. When a sigma factor is associated with the core the holoenzyme is formed, which can initiate transcription. Mg(2+) is required as a cofactor. Requires Zn(2+) as cofactor.

The catalysed reaction is RNA(n) + a ribonucleoside 5'-triphosphate = RNA(n+1) + diphosphate. DNA-dependent RNA polymerase catalyzes the transcription of DNA into RNA using the four ribonucleoside triphosphates as substrates. The polypeptide is DNA-directed RNA polymerase subunit beta' (Burkholderia lata (strain ATCC 17760 / DSM 23089 / LMG 22485 / NCIMB 9086 / R18194 / 383)).